A 444-amino-acid polypeptide reads, in one-letter code: Methylenetetrahydrofolate--tRNA-(uracil-5-)-methyltransferase TrmFO (444 aa).

An FAD-binding site is contributed by 10-15 (GAGLAG).

It belongs to the MnmG family. TrmFO subfamily. FAD serves as cofactor.

The protein resides in the cytoplasm. The catalysed reaction is uridine(54) in tRNA + (6R)-5,10-methylene-5,6,7,8-tetrahydrofolate + NADH + H(+) = 5-methyluridine(54) in tRNA + (6S)-5,6,7,8-tetrahydrofolate + NAD(+). The enzyme catalyses uridine(54) in tRNA + (6R)-5,10-methylene-5,6,7,8-tetrahydrofolate + NADPH + H(+) = 5-methyluridine(54) in tRNA + (6S)-5,6,7,8-tetrahydrofolate + NADP(+). In terms of biological role, catalyzes the folate-dependent formation of 5-methyl-uridine at position 54 (M-5-U54) in all tRNAs. The sequence is that of Methylenetetrahydrofolate--tRNA-(uracil-5-)-methyltransferase TrmFO from Streptococcus agalactiae serotype Ia (strain ATCC 27591 / A909 / CDC SS700).